The sequence spans 357 residues: Norreticuline-7-O-methyltransferase (357 aa).

Asp225 provides a ligand contact to S-adenosyl-L-methionine. The active-site Proton acceptor is His263.

This sequence belongs to the class I-like SAM-binding methyltransferase superfamily. Cation-independent O-methyltransferase family. In terms of tissue distribution, expressed instems, leaves, roots and seedlings.

Its function is as follows. Involved in the biosynthesis of benzylisoquinoline alkaloids. Catalyzes specifically the methylation of norreticuline at position seven to produce norlaudanine. No activity with norcoclaurine, reticuline, norlaudanosoline, norisoorientaline, scoulerine, salutaridinol, oripavine, salsolinol, codeine or morphine. Involved in papaverine biosynthesis. In Papaver somniferum (Opium poppy), this protein is Norreticuline-7-O-methyltransferase.